A 160-amino-acid polypeptide reads, in one-letter code: Nucleotide-binding protein TERTU_3542 (160 aa).

This sequence belongs to the YajQ family.

In terms of biological role, nucleotide-binding protein. This is Nucleotide-binding protein TERTU_3542 from Teredinibacter turnerae (strain ATCC 39867 / T7901).